The chain runs to 762 residues: uncharacterized protein (762 aa).

The segment at 1–26 (MENLKSASPEEDSPRHGDNMGKPKRI) is disordered. Basic and acidic residues predominate over residues 12-21 (DSPRHGDNMG). The zn(2)-C6 fungal-type DNA-binding region spans 30–57 (CDMCRKRKIRCDGKQPACSNCVSHGIPC). Residues 647–668 (QSHVPPRISSNHSDTSVKSNSP) are disordered.

The protein localises to the nucleus. This is an uncharacterized protein from Schizosaccharomyces pombe (strain 972 / ATCC 24843) (Fission yeast).